The following is a 256-amino-acid chain: Enkurin (256 aa).

The SH3-binding signature appears at 83–89; that stretch reads PKKPAVP. One can recognise an Enkurin domain in the interval 160 to 252; that stretch reads KRNEEIKKAQ…IIEKHKIIYI (93 aa). The tract at residues 160–255 is interaction with TRPC proteins; the sequence is KRNEEIKKAQ…KHKIIYIANN (96 aa). In terms of domain architecture, IQ spans 176 to 187; that stretch reads IQENLKKAAMKR.

As to quaternary structure, microtubule inner protein component of sperm flagellar doublet microtubules. Binds calmodulin via its IQ domain. Interacts with TRPC1, TRPC2, TRPC5, but not TRPC3. Interacts with CFAP45. Expressed in airway epithelial cells.

It is found in the cytoplasm. Its subcellular location is the cytoskeleton. The protein localises to the cilium axoneme. The protein resides in the flagellum axoneme. Functionally, adapter that functions to localize a calcium-sensitive signal transduction machinery in sperm to a calcium-permeable ion channel. Microtubule inner protein (MIP) part of the dynein-decorated doublet microtubules (DMTs) in cilia axoneme, which is required for motile cilia beating. The protein is Enkurin of Homo sapiens (Human).